We begin with the raw amino-acid sequence, 207 residues long: Twist-related protein 1 (207 aa).

The span at 1 to 18 (MMQDVSSSPVSPADDSLS) shows a compositional bias: low complexity. The segment at 1–110 (MMQDVSSSPV…GGGSPQSYEE (110 aa)) is disordered. Basic residues predominate over residues 34–43 (RGGRKRRSSR). Composition is skewed to gly residues over residues 46–65 (AGGG…GGDE) and 80–104 (GCGG…GGGS). Positions 113–164 (TQRVMANVRERQRTQSLNEAFAALRKIIPTLPSDKLSKIQTLKLAARYIDFL) constitute a bHLH domain. The segment at 166–196 (QVLQSDELDSKMASCSYVAHERLSYAFSVWR) is sufficient for transactivation activity.

Efficient DNA binding requires dimerization with another bHLH protein. Homodimer or heterodimer with E proteins such as TCF3. ID1 binds preferentially to TCF3 but does not interact efficiently with TWIST1 so ID1 levels control the amount of TCF3 available to dimerize with TWIST and thus determine the type of dimer formed.

It localises to the nucleus. Its function is as follows. Acts as a transcriptional regulator. Inhibits myogenesis by sequestrating E proteins, inhibiting trans-activation by MEF2, and inhibiting DNA-binding by MYOD1 through physical interaction. This interaction probably involves the basic domains of both proteins. Also represses expression of pro-inflammatory cytokines such as TNFA and IL1B. Regulates cranial suture patterning and fusion. Activates transcription as a heterodimer with E proteins. Regulates gene expression differentially, depending on dimer composition. Homodimers induce expression of FGFR2 and POSTN while heterodimers repress FGFR2 and POSTN expression and induce THBS1 expression. Heterodimerization is also required for osteoblast differentiation. Represses the activity of the circadian transcriptional activator: NPAS2-BMAL1 heterodimer. The protein is Twist-related protein 1 (TWIST1) of Cebus capucinus (White-faced sapajou).